We begin with the raw amino-acid sequence, 475 residues long: Cysteine--tRNA ligase (475 aa).

Position 28 (C28) interacts with Zn(2+). A 'HIGH' region motif is present at residues 30–40 (PTVYDETHIGH). Residues C208, H233, and E237 each contribute to the Zn(2+) site. Positions 265–269 (KMSKS) match the 'KMSKS' region motif. Residue K268 coordinates ATP.

The protein belongs to the class-I aminoacyl-tRNA synthetase family. It depends on Zn(2+) as a cofactor.

The protein resides in the cytoplasm. It carries out the reaction tRNA(Cys) + L-cysteine + ATP = L-cysteinyl-tRNA(Cys) + AMP + diphosphate. The sequence is that of Cysteine--tRNA ligase from Methanococcus vannielii (strain ATCC 35089 / DSM 1224 / JCM 13029 / OCM 148 / SB).